The primary structure comprises 418 residues: 3-isopropylmalate dehydratase large subunit (418 aa).

Residues Cys298, Cys358, and Cys361 each coordinate [4Fe-4S] cluster.

This sequence belongs to the aconitase/IPM isomerase family. LeuC type 2 subfamily. As to quaternary structure, heterodimer of LeuC and LeuD. The cofactor is [4Fe-4S] cluster.

It carries out the reaction (2R,3S)-3-isopropylmalate = (2S)-2-isopropylmalate. The protein operates within amino-acid biosynthesis; L-leucine biosynthesis; L-leucine from 3-methyl-2-oxobutanoate: step 2/4. Catalyzes the isomerization between 2-isopropylmalate and 3-isopropylmalate, via the formation of 2-isopropylmaleate. The sequence is that of 3-isopropylmalate dehydratase large subunit from Thermoanaerobacter sp. (strain X514).